Here is a 192-residue protein sequence, read N- to C-terminus: MGQIEWAMWANEQALASGLILITGGIVATAGRFTQWYFGAYSIAAGVLICLLEYPRGKRKKGSTMERCGQKYLTSVVKLFGPLTRNYYVRAALHFLLSVPAGFLLATILGTVCLAIASVIYLLAAIRGEQWTPIEPKPKERPQVGGTIKQPPTNPPPRPPAEVRKKPSEGEEEAASAGGPQVNPMPVTDEVV.

Over 2 to 7 (GQIEWA) the chain is Cytoplasmic. A helical membrane pass occupies residues 8-30 (MWANEQALASGLILITGGIVATA). Residues 31–35 (GRFTQ) lie on the Extracellular side of the membrane. Residues 36–53 (WYFGAYSIAAGVLICLLE) form a helical membrane-spanning segment. At 54–69 (YPRGKRKKGSTMERCG) the chain is on the cytoplasmic side. An intramembrane segment occupies 70-80 (QKYLTSVVKLF). The Cytoplasmic segment spans residues 81-86 (GPLTRN). The helical transmembrane segment at 87 to 104 (YYVRAALHFLLSVPAGFL) threads the bilayer. Position 105 (Leu105) is a topological domain, extracellular. Residues 106–126 (ATILGTVCLAIASVIYLLAAI) traverse the membrane as a helical segment. At 127 to 192 (RGEQWTPIEP…NPMPVTDEVV (66 aa)) the chain is on the cytoplasmic side. Residues 134–192 (IEPKPKERPQVGGTIKQPPTNPPPRPPAEVRKKPSEGEEEAASAGGPQVNPMPVTDEVV) are disordered. Thr147 carries the phosphothreonine modification. A Glycyl lysine isopeptide (Lys-Gly) (interchain with G-Cter in ubiquitin) cross-link involves residue Lys149. Phosphoserine is present on residues Ser168 and Ser176.

This sequence belongs to the p22phox family. In terms of assembly, component of the phagocyte NADPH oxidase core complex/cytochrome b558 complex, composed of CYBB (heavy chain (beta)) and CYBA (light chain (alpha)). Component of the phagocyte NADPH oxidase complex composed of an obligatory core heterodimer formed by the membrane proteins CYBA and CYBB and the cytosolic regulatory subunits NCF1/p47-phox, NCF2/p67-phox, NCF4/p40-phox and the small GTPase RAC1 or RAC2. Interacts with NCF1 (via SH3 domain). Interacts with SH3PXD2A. Interacts with DUOX1, DUOX2 and TPO. Interacts with NOX4; this interaction mediates superoxide generation. Interacts with calprotectin (S100A8/9). Interacts with GBP7. Interacts with NOXO1. Forms a heterodimer with NOX3 and is essential for activity and cell membrane localization of NOX3. Interacts with NOX1. In terms of processing, ubiquitinated at Lys-149 likely by RNF145. Post-translationally, phosphorylation at Thr-147 enhances NADPH oxidase activity by promoting NCF1/p47-phox binding. In terms of tissue distribution, the strongest level of expression is found in kidney, peritoneal neutrophils and peritoneal macrophages, and a lower level in spleen and small intestine. Very low level of expression can be noted in brain, liver, testis, and heart.

The protein localises to the cell membrane. Its function is as follows. Subunit of NADPH oxidase complexes that is required for the NADPH oxidase activity that generates, in various cell types, superoxide from molecular oxygen utilizing NADPH as an electron donor. Subunit of the phagocyte NADPH oxidase complex that mediates the transfer of electrons from cytosolic NADPH to O2 to produce the superoxide anion (O2(-)). In the activated complex, electrons are first transferred from NADPH to flavin adenine dinucleotide (FAD) and subsequently transferred via two heme molecules to molecular oxygen, producing superoxide through an outer-sphere reaction. Activation of the NADPH oxidase complex is initiated by the assembly of cytosolic subunits of the NADPH oxidase complex with the core NADPH oxidase complex to form a complex at the plasma membrane or phagosomal membrane. This activation process is initiated by phosphorylation dependent binding of the cytosolic NCF1/p47-phox subunit to the C-terminus of CYBA/p22-phox. Aassociates with NOX3 to form a functional NADPH oxidase constitutively generating superoxide. The protein is Cytochrome b-245 light chain of Mus musculus (Mouse).